The sequence spans 435 residues: Methylenetetrahydrofolate--tRNA-(uracil-5-)-methyltransferase TrmFO (435 aa).

10–15 (GAGLAG) provides a ligand contact to FAD.

It belongs to the MnmG family. TrmFO subfamily. It depends on FAD as a cofactor.

Its subcellular location is the cytoplasm. It carries out the reaction uridine(54) in tRNA + (6R)-5,10-methylene-5,6,7,8-tetrahydrofolate + NADH + H(+) = 5-methyluridine(54) in tRNA + (6S)-5,6,7,8-tetrahydrofolate + NAD(+). It catalyses the reaction uridine(54) in tRNA + (6R)-5,10-methylene-5,6,7,8-tetrahydrofolate + NADPH + H(+) = 5-methyluridine(54) in tRNA + (6S)-5,6,7,8-tetrahydrofolate + NADP(+). Its function is as follows. Catalyzes the folate-dependent formation of 5-methyl-uridine at position 54 (M-5-U54) in all tRNAs. The protein is Methylenetetrahydrofolate--tRNA-(uracil-5-)-methyltransferase TrmFO of Geotalea uraniireducens (strain Rf4) (Geobacter uraniireducens).